A 181-amino-acid polypeptide reads, in one-letter code: Ribulose bisphosphate carboxylase small subunit 2B, chloroplastic (181 aa).

Residues Met-1–Ser-54 constitute a chloroplast transit peptide.

The protein belongs to the RuBisCO small chain family. As to quaternary structure, heterohexadecamer of 8 large and 8 small subunits.

It localises to the plastid. It is found in the chloroplast. In terms of biological role, ruBisCO catalyzes two reactions: the carboxylation of D-ribulose 1,5-bisphosphate, the primary event in carbon dioxide fixation, as well as the oxidative fragmentation of the pentose substrate. Both reactions occur simultaneously and in competition at the same active site. Although the small subunit is not catalytic it is essential for maximal activity. In Arabidopsis thaliana (Mouse-ear cress), this protein is Ribulose bisphosphate carboxylase small subunit 2B, chloroplastic (RBCS-2B).